The chain runs to 410 residues: Trifunctional NAD biosynthesis/regulator protein NadR (410 aa).

The HTH cro/C1-type domain maps to 7-62 (LKTAIKQQGCTLQQVADASGMTKGYLSQLLNAKIKSPSAQKLEALHRFLGLEFPRQ). Positions 18-37 (LQQVADASGMTKGYLSQLLN) form a DNA-binding region, H-T-H motif. The interval 63 to 229 (KKTIGVVFGK…EYIPTEVKPF (167 aa)) is nicotinamide mononucleotide adenylyltransferase. Residues 70 to 73 (FGKF), histidine 77, arginine 104, 144 to 157 (EEGM…WDVW), 177 to 179 (TSE), 204 to 206 (MSI), 259 to 261 (SAW), and 294 to 297 (YIDF) each bind NAD(+). Residues 230–410 (FVRTVAILGG…LVREMMGEQR (181 aa)) form a ribosylnicotinamide kinase region.

In the central section; belongs to the bacterial NMN adenylyltransferase family. The protein in the C-terminal section; belongs to the bacterial RNK family. Homotetramer.

It is found in the cell membrane. The protein localises to the cytoplasm. It catalyses the reaction beta-nicotinamide D-ribonucleotide + ATP + H(+) = diphosphate + NAD(+). The catalysed reaction is beta-nicotinamide D-riboside + ATP = beta-nicotinamide D-ribonucleotide + ADP + H(+). Its pathway is cofactor biosynthesis; NAD(+) biosynthesis [regulation]. It functions in the pathway cofactor biosynthesis; NAD(+) biosynthesis; NAD(+) from nicotinamide D-ribonucleotide: step 1/1. With respect to regulation, feed-back regulated by NAD. A high level of NAD causes NadR to lose enzymatic activity and repress several NAD synthetic genes; conversely, a low NAD level activates the assimilatory enzymatic activities and leads to derepression of biosynthetic genes. In terms of biological role, this enzyme has three activities: DNA binding, nicotinamide mononucleotide (NMN) adenylyltransferase and ribosylnicotinamide (RN) kinase. The DNA-binding domain binds to the nadB operator sequence in an NAD- and ATP-dependent manner. As NAD levels increase within the cell, the affinity of NadR for the nadB operator regions of nadA, nadB, and pncB increases, repressing the transcription of these genes. The RN kinase activity catalyzes the phosphorylation of RN to form nicotinamide ribonucleotide. The NMN adenylyltransferase activity catalyzes the transfer of the AMP moiety of ATP to nicotinamide ribonucleotide to form NAD(+). The NMN adenylyltransferase domain also functions as the NAD and ATP sensor. In Escherichia coli (strain K12), this protein is Trifunctional NAD biosynthesis/regulator protein NadR (nadR).